We begin with the raw amino-acid sequence, 503 residues long: SWI/SNF and RSC complexes subunit ssr2 (503 aa).

In terms of domain architecture, SWIRM spans I18 to A115. S175 carries the post-translational modification Phosphoserine. Residues R188–F242 form a ZZ-type; degenerate zinc finger. Residues C193, C196, C216, and C219 each contribute to the Zn(2+) site. The region spanning D245–P296 is the SANT domain. S306 is subject to Phosphoserine.

Belongs to the SMARCC family. As to quaternary structure, component of the RSC complex composed of at least arp9, arp42, rsc1, rsc4, rsc7, rsc9, rsc58, sfh1, snf21, ssr1, ssr2, ssr3 and ssr4. The complex interacts with histone and histone variant components of centromeric chromatin. Component of the SWI/SNF global transcription activator complex composed of at least arp9, arp42, snf5, snf22, snf30, sbf59, sol1, ssr1, ssr2, ssr3, ssr4 and tfg3.

Its subcellular location is the cytoplasm. The protein resides in the nucleus. Functionally, component of the chromatin structure remodeling complex (RSC), which is involved in transcription regulation and nucleosome positioning. Controls particularly membrane and organelle development genes. Part of the SWI/SNF complex, an ATP-dependent chromatin remodeling complex, required for the positive and negative regulation of gene expression of a large number of genes. It changes chromatin structure by altering DNA-histone contacts within a nucleosome, leading eventually to a change in nucleosome position, thus facilitating or repressing binding of gene-specific transcription factors. The protein is SWI/SNF and RSC complexes subunit ssr2 (ssr2) of Schizosaccharomyces pombe (strain 972 / ATCC 24843) (Fission yeast).